A 351-amino-acid polypeptide reads, in one-letter code: Histidine-rich glycoprotein (351 aa).

Positions 1–23 are cleaved as a signal peptide; that stretch reads MFTSLKKVATFSFLVWISQYSGS. A propeptide spanning residues 24–47 is cleaved from the precursor; that stretch reads NSCSSSLVKHIPQTGSNLTFDRVL. Residue N40 is glycosylated (N-linked (GlcNAc...) asparagine). A compositionally biased stretch (basic and acidic residues) spans 57–91; it reads LHEEHHHHHPEEHHEPHHEEHHHHHPEEHHEPHHE. Positions 57-351 are disordered; the sequence is LHEEHHHHHP…DAHHHHHHHH (295 aa). 6 consecutive repeat copies span residues 59 to 74, 75 to 90, 91 to 107, 108 to 123, 124 to 138, and 139 to 153. The segment at 59–90 is 2 X 16 AA tandem repeats; that stretch reads EEHHHHHPEEHHEPHHEEHHHHHPEEHHEPHH. The interval 91–123 is 2 X 17 AA tandem repeats; the sequence is EEHHHHHPHPHHHHHHHPPHHHHHLGHHHHHHH. The segment covering 92–351 has biased composition (basic residues); it reads EHHHHHPHPH…DAHHHHHHHH (260 aa). Residues 124 to 153 are 2 X 15 AA tandem repeats; that stretch reads AAHHHHHEEHHHHHHAAHHHHHEEHHHHHH. The tract at residues 173–351 is 18 X 10 AA tandem repeats; sequence APHHHHHHHH…DAHHHHHHHH (179 aa).

In Plasmodium lophurae, this protein is Histidine-rich glycoprotein.